Consider the following 66-residue polypeptide: Sodium channel alpha-toxin Acra8 (66 aa).

An LCN-type CS-alpha/beta domain is found at 2 to 64; the sequence is RDGYIVDDKN…VPIKEKGRCN (63 aa). 4 disulfide bridges follow: cysteine 12–cysteine 63, cysteine 16–cysteine 36, cysteine 22–cysteine 46, and cysteine 26–cysteine 48. Asparagine 64 bears the Asparagine amide mark. Positions 65 to 66 are excised as a propeptide; the sequence is GR.

It belongs to the long (4 C-C) scorpion toxin superfamily. Sodium channel inhibitor family. Alpha subfamily. Expressed by the venom gland.

It is found in the secreted. In terms of biological role, alpha toxins bind voltage-independently at site-3 of sodium channels (Nav) and inhibit the inactivation of the activated channels, thereby blocking neuronal transmission. The polypeptide is Sodium channel alpha-toxin Acra8 (Androctonus crassicauda (Arabian fat-tailed scorpion)).